Consider the following 462-residue polypeptide: MADAPGLIPIFLLGYLLSTECAVFLDRENATKILTRPKRYNSGKLEEFVQGNLERECIEERCSFEEAREVFENTEKTTEFWKQYVDGDQCESNPCLNGGICKDDINSYECWCQAGFEGRNCELDATCSIKNGRCKQFCKNSPDNKIICSCTEGYQLAEDQKSCEPAVPFPCGRVSVAYNSKKITRAETVFSNTDYGNSTELILDDITNSTILDNLTENSEPINDFTRVVGGENAKPGQIPWQVILNGEIEAFCGGAIINEKWIVTAAHCLKPGDKIEVVAGEHNIDEKEDTEQRRNVIRTIPHHQYNATINKYSHDIALLELDKPLILNSYVTPICVANKEYTNIFLKFGSGYVSGWGKVFNKGRQASILQYLRVPLVDRATCLRSTKFSIYNNMFCAGYREGGKDSCEGDSGGPHVTEVEGTSFLTGIISWGEECAMKGKYGIYTKVSRYVNWIKEKTKLT.

The signal sequence occupies residues 1-21 (MADAPGLIPIFLLGYLLSTEC). Positions 22-39 (AVFLDRENATKILTRPKR) are excised as a propeptide. 11 residues coordinate Ca(2+): Y40, N41, E46, E47, E54, E56, E59, E60, E65, E66, and E69. A Gla domain is found at 40–86 (YNSGKLEEFVQGNLERECIEERCSFEEAREVFENTEKTTEFWKQYVD). A 4-carboxyglutamate mark is found at E46, E47, E54, E56, E59, E60, E65, E66, E69, E72, and E75. E54 provides a ligand contact to Mg(2+). Cysteines 57 and 62 form a disulfide. Residue E59 coordinates Mg(2+). A Mg(2+)-binding site is contributed by E65. E69 contributes to the Mg(2+) binding site. Residue E75 participates in Ca(2+) binding. Position 75 (E75) interacts with Mg(2+). Residue T78 is glycosylated (O-linked (GalNAc...) threonine). The Ca(2+) site is built by E79, D86, G87, and Q89. E79 bears the 4-carboxyglutamate mark. E79 provides a ligand contact to Mg(2+). The 37-residue stretch at 86-122 (DGDQCESNPCLNGGICKDDINSYECWCQAGFEGRNCE) folds into the EGF-like; calcium-binding domain. Intrachain disulfides connect C90–C101, C95–C110, C112–C121, C127–C138, C134–C148, C150–C163, C171–C336, C253–C269, C383–C397, and C408–C436. O-linked (Glc...) serine glycosylation is present at S92. Residues D103 and D104 each coordinate Ca(2+). Residue D103 is modified to (3R)-3-hydroxyaspartate. The residue at position 107 (S107) is a Phosphoserine. Residues 186–227 (AETVFSNTDYGNSTELILDDITNSTILDNLTENSEPINDFTR) constitute a propeptide, activation peptide. Y195 is subject to Sulfotyrosine. Residue S198 is modified to Phosphoserine. T199 bears the Phosphothreonine; alternate mark. T199 carries an O-linked (GalNAc...) threonine; alternate glycan. N-linked (GlcNAc...) asparagine glycans are attached at residues N208 and N214. T216 and T226 each carry an O-linked (GalNAc...) threonine glycan. A Peptidase S1 domain is found at 228–460 (VVGGENAKPG…YVNWIKEKTK (233 aa)). The active-site Charge relay system is the H268. Ca(2+)-binding residues include E282, N284, E287, E289, and E292. An N-linked (GlcNAc...) asparagine glycan is attached at N307. Residue D316 is the Charge relay system of the active site. S412 (charge relay system) is an active-site residue.

Belongs to the peptidase S1 family. In terms of assembly, heterodimer of a light chain and a heavy chain; disulfide-linked. Interacts (inactive and activated) with F11 (activated) in calcium-dependent manner. Interacts with SERPINC1. Interacts (inactive and activated) with nitrophorin-2, an anticoagulant protein from Rhodnius prolixus. In terms of processing, activated by factor XIa, which excises the activation peptide. The propeptide can also be removed by snake venom protease. Activated by coagulation factor VIIa-tissue factor (F7-F3) complex in calcium-dependent manner. The iron and 2-oxoglutarate dependent 3-hydroxylation of aspartate and asparagine is (R) stereospecific within EGF domains. Post-translationally, predominantly O-glucosylated at Ser-92 by POGLUT1 in vitro.

The protein resides in the secreted. It catalyses the reaction Selective cleavage of Arg-|-Ile bond in factor X to form factor Xa.. Functionally, factor IX is a vitamin K-dependent plasma protein that participates in the intrinsic pathway of blood coagulation by converting factor X to its active form in the presence of Ca(2+) ions, phospholipids, and factor VIIIa. The protein is Coagulation factor IX (F9) of Rattus norvegicus (Rat).